Reading from the N-terminus, the 383-residue chain is 8-amino-7-oxononanoate synthase (383 aa).

R21 contributes to the substrate binding site. 108 to 109 (GY) provides a ligand contact to pyridoxal 5'-phosphate. H133 provides a ligand contact to substrate. 3 residues coordinate pyridoxal 5'-phosphate: S179, H207, and T233. At K236 the chain carries N6-(pyridoxal phosphate)lysine. T350 is a binding site for substrate.

This sequence belongs to the class-II pyridoxal-phosphate-dependent aminotransferase family. BioF subfamily. As to quaternary structure, homodimer. It depends on pyridoxal 5'-phosphate as a cofactor.

The enzyme catalyses 6-carboxyhexanoyl-[ACP] + L-alanine + H(+) = (8S)-8-amino-7-oxononanoate + holo-[ACP] + CO2. It functions in the pathway cofactor biosynthesis; biotin biosynthesis. Functionally, catalyzes the decarboxylative condensation of pimeloyl-[acyl-carrier protein] and L-alanine to produce 8-amino-7-oxononanoate (AON), [acyl-carrier protein], and carbon dioxide. The sequence is that of 8-amino-7-oxononanoate synthase from Yersinia pseudotuberculosis serotype IB (strain PB1/+).